The primary structure comprises 272 residues: L-aspartate dehydrogenase 3 (272 aa).

The NAD(+) site is built by Ala-126 and Asn-194. His-224 is a catalytic residue.

The protein belongs to the L-aspartate dehydrogenase family.

The enzyme catalyses L-aspartate + NADP(+) + H2O = oxaloacetate + NH4(+) + NADPH + H(+). It catalyses the reaction L-aspartate + NAD(+) + H2O = oxaloacetate + NH4(+) + NADH + H(+). It functions in the pathway cofactor biosynthesis; NAD(+) biosynthesis; iminoaspartate from L-aspartate (dehydrogenase route): step 1/1. Its function is as follows. Specifically catalyzes the NAD or NADP-dependent dehydrogenation of L-aspartate to iminoaspartate. The polypeptide is L-aspartate dehydrogenase 3 (Bordetella bronchiseptica (strain ATCC BAA-588 / NCTC 13252 / RB50) (Alcaligenes bronchisepticus)).